Reading from the N-terminus, the 526-residue chain is Dual specificity tyrosine-phosphorylation-regulated kinase 2 (526 aa).

Composition is skewed to polar residues over residues 30 to 40 (TTQPNGLTTLG) and 60 to 70 (GSSSSLKSTDG). Residues 30–76 (TTQPNGLTTLGKSGLPVVQDRQSESAHRRQGSSSSLKSTDGTGKVKA) form a disordered region. Thr31 is subject to Phosphothreonine; by ATM. Residues 114 to 116 (KKR) carry the Nuclear localization signal motif. In terms of domain architecture, Protein kinase spans 147–460 (YEVLKVIGKG…PSQALRHPWL (314 aa)). ATP-binding positions include 153–161 (IGKGSFGQV), Lys176, and 226–229 (FELL). Asp273 functions as the Proton acceptor in the catalytic mechanism. Tyr307 carries the phosphotyrosine modification. A Phosphoserine; by ATM modification is found at Ser367. Residues 462 to 499 (RRLPKPPTGEKASAKRITESTGAITSISKLPPTSSSAS) form a disordered region. Positions 480 to 499 (ESTGAITSISKLPPTSSSAS) are enriched in polar residues.

The protein belongs to the protein kinase superfamily. CMGC Ser/Thr protein kinase family. MNB/DYRK subfamily. In terms of assembly, interacts with MDM2. Mg(2+) is required as a cofactor. The cofactor is Mn(2+). Post-translationally, phosphorylated on serine/threonine residues. Phosphorylation on Thr-31 and Ser-367 by ATM in response to genotoxic stress disrupts MDM2 binding and prevents MDM2-mediated ubiquitination and subsequent proteasome degradation, thus promoting p53/TP53-mediated apoptosis. Ubiquitination in nucleus by MDM2 in normal conditions leads to proteasome degradation.

Its subcellular location is the cytoplasm. It localises to the nucleus. It catalyses the reaction L-seryl-[protein] + ATP = O-phospho-L-seryl-[protein] + ADP + H(+). It carries out the reaction L-threonyl-[protein] + ATP = O-phospho-L-threonyl-[protein] + ADP + H(+). The enzyme catalyses L-tyrosyl-[protein] + ATP = O-phospho-L-tyrosyl-[protein] + ADP + H(+). With respect to regulation, autophosphorylates on tyrosine residues. Its function is as follows. Serine/threonine-protein kinase involved in the control of mitotic transition and the regulation of cellular growth and/or development. The protein is Dual specificity tyrosine-phosphorylation-regulated kinase 2 of Gallus gallus (Chicken).